Here is a 103-residue protein sequence, read N- to C-terminus: Large ribosomal subunit protein uL24 (103 aa).

The protein belongs to the universal ribosomal protein uL24 family. As to quaternary structure, part of the 50S ribosomal subunit.

In terms of biological role, one of two assembly initiator proteins, it binds directly to the 5'-end of the 23S rRNA, where it nucleates assembly of the 50S subunit. Its function is as follows. One of the proteins that surrounds the polypeptide exit tunnel on the outside of the subunit. This chain is Large ribosomal subunit protein uL24, found in Haemophilus ducreyi (strain 35000HP / ATCC 700724).